The chain runs to 68 residues: Potassium channel toxin epsilon-KTx 1.2 (68 aa).

The first 26 residues, 1–26, serve as a signal peptide directing secretion; it reads MKFSCGFLLIFLVLSAMIATFSEVEA. 4 cysteine pairs are disulfide-bonded: cysteine 30–cysteine 38, cysteine 33–cysteine 54, cysteine 37–cysteine 47, and cysteine 42–cysteine 52. Residue tyrosine 55 is modified to Tyrosine amide. A propeptide spanning residues 57–68 is cleaved from the precursor; it reads RSDLNEEFENYQ.

This sequence belongs to the short scorpion toxin superfamily. Potassium channel inhibitor family. Epsilon-KTx 01 subfamily. In terms of tissue distribution, expressed by the venom gland.

Its subcellular location is the secreted. Its function is as follows. Potassium channel blocker. At 3 uM, this toxin blocks voltage-gated potassium channels rKv1.2/KCNA2 (5%), hKv1.3/KCNA3 (10%),rKv1.4/KCNA4 (20%), Kv11/hERG (24%), and Shaker-IR (27%). This Tityus serrulatus (Brazilian scorpion) protein is Potassium channel toxin epsilon-KTx 1.2.